The chain runs to 150 residues: Arginine repressor (150 aa).

This sequence belongs to the ArgR family.

Its subcellular location is the cytoplasm. The protein operates within amino-acid biosynthesis; L-arginine biosynthesis [regulation]. Its function is as follows. Regulates arginine biosynthesis genes. This Staphylococcus saprophyticus subsp. saprophyticus (strain ATCC 15305 / DSM 20229 / NCIMB 8711 / NCTC 7292 / S-41) protein is Arginine repressor.